Reading from the N-terminus, the 226-residue chain is UPF0758 protein Spy49_0870 (226 aa).

The 123-residue stretch at 103–225 (SVLTSVQVAE…YYSFREKSTL (123 aa)) folds into the MPN domain. Zn(2+) is bound by residues His174, His176, and Asp187. Residues 174–187 (HNHPSGNIEPSSND) carry the JAMM motif motif.

The protein belongs to the UPF0758 family.

This chain is UPF0758 protein Spy49_0870, found in Streptococcus pyogenes serotype M49 (strain NZ131).